A 457-amino-acid chain; its full sequence is UDP-N-acetylmuramoylalanine--D-glutamate ligase (457 aa).

126–132 provides a ligand contact to ATP; it reads GTAGKGS.

It belongs to the MurCDEF family.

The protein localises to the cytoplasm. The catalysed reaction is UDP-N-acetyl-alpha-D-muramoyl-L-alanine + D-glutamate + ATP = UDP-N-acetyl-alpha-D-muramoyl-L-alanyl-D-glutamate + ADP + phosphate + H(+). It participates in cell wall biogenesis; peptidoglycan biosynthesis. Its function is as follows. Cell wall formation. Catalyzes the addition of glutamate to the nucleotide precursor UDP-N-acetylmuramoyl-L-alanine (UMA). The chain is UDP-N-acetylmuramoylalanine--D-glutamate ligase from Deinococcus radiodurans (strain ATCC 13939 / DSM 20539 / JCM 16871 / CCUG 27074 / LMG 4051 / NBRC 15346 / NCIMB 9279 / VKM B-1422 / R1).